The sequence spans 152 residues: MSVLSILNYPNKKLRKIASNISLIDSEIKSLIKNMLETMYFNEGIGLAATQVDVHKRIIVIDISKNKNKPLILINPVFINKCGAQTFEEGCLSIPKKTAFVNRSKKVKIKAINCLGEEFLLKSKGLLATCIQHEMDHLIGKLFIDYIKPLKN.

Cys91 and His133 together coordinate Fe cation. The active site involves Glu134. His137 serves as a coordination point for Fe cation.

The protein belongs to the polypeptide deformylase family. Fe(2+) is required as a cofactor.

The catalysed reaction is N-terminal N-formyl-L-methionyl-[peptide] + H2O = N-terminal L-methionyl-[peptide] + formate. In terms of biological role, removes the formyl group from the N-terminal Met of newly synthesized proteins. Requires at least a dipeptide for an efficient rate of reaction. N-terminal L-methionine is a prerequisite for activity but the enzyme has broad specificity at other positions. The chain is Peptide deformylase from Wigglesworthia glossinidia brevipalpis.